Reading from the N-terminus, the 522-residue chain is DNA primase DnaG (522 aa).

The 87-residue stretch at 171–257 folds into the Toprim domain; the sequence is DAIIILEGRA…CVEDLVQKEI (87 aa). Residues Glu177, Asp219, and Asp221 each contribute to the Mg(2+) site.

This sequence belongs to the archaeal DnaG primase family. As to quaternary structure, forms a ternary complex with MCM helicase and DNA. Component of the archaeal exosome complex. Mg(2+) serves as cofactor.

The enzyme catalyses ssDNA + n NTP = ssDNA/pppN(pN)n-1 hybrid + (n-1) diphosphate.. RNA polymerase that catalyzes the synthesis of short RNA molecules used as primers for DNA polymerase during DNA replication. Also part of the exosome, which is a complex involved in RNA degradation. Acts as a poly(A)-binding protein that enhances the interaction between heteromeric, adenine-rich transcripts and the exosome. This chain is DNA primase DnaG, found in Methanosarcina mazei (strain ATCC BAA-159 / DSM 3647 / Goe1 / Go1 / JCM 11833 / OCM 88) (Methanosarcina frisia).